A 66-amino-acid polypeptide reads, in one-letter code: Large ribosomal subunit protein bL35 (66 aa).

2 stretches are compositionally biased toward basic residues: residues 1 to 16 (MPKQ…RVKR) and 23 to 45 (KRGR…RQLR). A disordered region spans residues 1 to 53 (MPKQKTHRGLAKRVKRTGGGGLKRGRAFTSHRFHGKTKKQRRQLRKASMVAKG).

It belongs to the bacterial ribosomal protein bL35 family.

This is Large ribosomal subunit protein bL35 from Enterococcus faecalis (strain ATCC 700802 / V583).